The primary structure comprises 75 residues: Small ribosomal subunit protein bS18 (75 aa).

Belongs to the bacterial ribosomal protein bS18 family. Part of the 30S ribosomal subunit. Forms a tight heterodimer with protein bS6.

Binds as a heterodimer with protein bS6 to the central domain of the 16S rRNA, where it helps stabilize the platform of the 30S subunit. This chain is Small ribosomal subunit protein bS18, found in Shewanella loihica (strain ATCC BAA-1088 / PV-4).